Here is a 431-residue protein sequence, read N- to C-terminus: Enolase (431 aa).

Q167 contacts (2R)-2-phosphoglycerate. E209 serves as the catalytic Proton donor. Positions 246, 290, and 317 each coordinate Mg(2+). (2R)-2-phosphoglycerate contacts are provided by K342, R371, S372, and K393. K342 acts as the Proton acceptor in catalysis.

It belongs to the enolase family. As to quaternary structure, component of the RNA degradosome, a multiprotein complex involved in RNA processing and mRNA degradation. Mg(2+) is required as a cofactor.

The protein localises to the cytoplasm. It is found in the secreted. The protein resides in the cell surface. It carries out the reaction (2R)-2-phosphoglycerate = phosphoenolpyruvate + H2O. The protein operates within carbohydrate degradation; glycolysis; pyruvate from D-glyceraldehyde 3-phosphate: step 4/5. Catalyzes the reversible conversion of 2-phosphoglycerate (2-PG) into phosphoenolpyruvate (PEP). It is essential for the degradation of carbohydrates via glycolysis. This Yersinia pseudotuberculosis serotype O:1b (strain IP 31758) protein is Enolase.